We begin with the raw amino-acid sequence, 296 residues long: Release factor glutamine methyltransferase (296 aa).

Residues 133-137, Asp156, and Asn201 each bind S-adenosyl-L-methionine; that span reads GTGSG. 201-204 provides a ligand contact to substrate; that stretch reads NPPY.

It belongs to the protein N5-glutamine methyltransferase family. PrmC subfamily.

The enzyme catalyses L-glutaminyl-[peptide chain release factor] + S-adenosyl-L-methionine = N(5)-methyl-L-glutaminyl-[peptide chain release factor] + S-adenosyl-L-homocysteine + H(+). Functionally, methylates the class 1 translation termination release factors RF1/PrfA and RF2/PrfB on the glutamine residue of the universally conserved GGQ motif. This Rhodopirellula baltica (strain DSM 10527 / NCIMB 13988 / SH1) protein is Release factor glutamine methyltransferase.